A 1143-amino-acid polypeptide reads, in one-letter code: DNA-directed RNA polymerase subunit beta (1143 aa).

This sequence belongs to the RNA polymerase beta chain family. As to quaternary structure, in plastids the minimal PEP RNA polymerase catalytic core is composed of four subunits: alpha, beta, beta', and beta''. When a (nuclear-encoded) sigma factor is associated with the core the holoenzyme is formed, which can initiate transcription.

It localises to the plastid. Its subcellular location is the chloroplast. It catalyses the reaction RNA(n) + a ribonucleoside 5'-triphosphate = RNA(n+1) + diphosphate. Its function is as follows. DNA-dependent RNA polymerase catalyzes the transcription of DNA into RNA using the four ribonucleoside triphosphates as substrates. This Porphyra purpurea (Red seaweed) protein is DNA-directed RNA polymerase subunit beta.